We begin with the raw amino-acid sequence, 334 residues long: Anthranilate phosphoribosyltransferase (334 aa).

5-phospho-alpha-D-ribose 1-diphosphate is bound by residues Gly-79, 82–83 (GD), Ser-87, 89–92 (NIST), 107–115 (KHGNRSISS), and Ser-119. Gly-79 is a binding site for anthranilate. Ser-91 contacts Mg(2+). Position 110 (Asn-110) interacts with anthranilate. Residue Arg-165 coordinates anthranilate. Asp-224 and Glu-225 together coordinate Mg(2+).

The protein belongs to the anthranilate phosphoribosyltransferase family. Homodimer. It depends on Mg(2+) as a cofactor.

It carries out the reaction N-(5-phospho-beta-D-ribosyl)anthranilate + diphosphate = 5-phospho-alpha-D-ribose 1-diphosphate + anthranilate. Its pathway is amino-acid biosynthesis; L-tryptophan biosynthesis; L-tryptophan from chorismate: step 2/5. Functionally, catalyzes the transfer of the phosphoribosyl group of 5-phosphorylribose-1-pyrophosphate (PRPP) to anthranilate to yield N-(5'-phosphoribosyl)-anthranilate (PRA). The polypeptide is Anthranilate phosphoribosyltransferase (Streptococcus pneumoniae serotype 19F (strain G54)).